A 2035-amino-acid chain; its full sequence is Host cell factor 1 (2035 aa).

A2 is subject to N-acetylalanine. Phosphoserine is present on S6. Kelch repeat units follow at residues 44–89, 93–140, 148–194, 217–265, and 266–313; these read LIVV…GFVC, RLLV…RLGH, KCYL…ITYG, KLVI…TIGN, and KMYV…LMDT. Glycyl lysine isopeptide (Lys-Gly) (interchain with G-Cter in ubiquitin) cross-links involve residues K105, K163, and K244. Residue K282 forms a Glycyl lysine isopeptide (Lys-Gly) (interchain with G-Cter in SUMO2) linkage. K288 carries the post-translational modification N6-acetyllysine. Residue K363 forms a Glycyl lysine isopeptide (Lys-Gly) (interchain with G-Cter in ubiquitin) linkage. The 101-residue stretch at 366 to 466 folds into the Fibronectin type-III 1 domain; the sequence is PPARVQLVRA…TTTTIQVLPT (101 aa). Residues 407 to 434 form a disordered region; the sequence is ATATSPTPNPVPSVPANPPKSPAPAAAA. Position 411 is a phosphoserine (S411). Residues 413–428 are compositionally biased toward pro residues; sequence TPNPVPSVPANPPKSP. The tract at residues 500-550 is required for interaction with OGT; the sequence is LVTMRPASQAGKAPVTVTSLPAGVRMVVPTQSAQGTVIGSSPQMSGMAALA. R504 and R524 each carry omega-N-methylarginine. S598, S666, and S669 each carry phosphoserine. An interaction with SIN3A region spans residues 610 to 722; it reads LKTAAAQVGT…KGPLPAGTIL (113 aa). Residues 750 to 902 form an interaction with ZBTB17 region; that stretch reads ILGISSVSPS…SLAGAGGHST (153 aa). An N6-acetyllysine modification is found at K813. An interaction with GABP2 region spans residues 813 to 912; the sequence is KIITAVPKIA…SASLATPITT (100 aa). HCF repeat repeat units lie at residues 1010–1035, 1072–1097, and 1101–1126; these read TLVC…TVVA, VRVC…ATSN, and QHGC…AMSS. The stretch at 1158-1183 is one HCF repeat 4; degenerate repeat; sequence AAQGSKSQCQTRQTSATSTTMTVMAT. Phosphoserine is present on S1205. An Omega-N-methylarginine modification is found at R1219. A Phosphoserine modification is found at S1224. HCF repeat repeat units follow at residues 1286-1311 and 1314-1339; these read TQVC…SNAG and QRVC…ATSN. Disordered stretches follow at residues 1292 to 1371, 1435 to 1470, and 1487 to 1515; these read PPCE…TMSV, TVTS…TSSS, and VTQS…QQLP. Low complexity-rich tracts occupy residues 1299 to 1312, 1329 to 1339, and 1362 to 1371; these read TGTT…NAGS, TTHTATTATSN, and TTSTGTTMSV. One copy of the HCF repeat 7; degenerate repeat lies at 1349-1374; that stretch reads QQPPAGRPCETHQTTSTGTTMSVSVG. The HCF repeat 8 repeat unit spans residues 1414–1439; the sequence is QRVCSNPPCETHETGTTHTATTVTSN. A Phosphothreonine modification is found at T1491. Over residues 1493–1502 the composition is skewed to pro residues; that stretch reads VPGPSVPPPE. A phosphoserine mark is found at S1497, S1507, and S1771. Fibronectin type-III domains lie at 1797–1888 and 1890–2006; these read LPPP…TCLP and FPGA…TSKD. Glycyl lysine isopeptide (Lys-Gly) (interchain with G-Cter in ubiquitin) cross-links involve residues K1807 and K1808. The residue at position 1838 (S1838) is a Phosphoserine. A disordered region spans residues 1994 to 2035; that stretch reads ATQVRWLQETSKDSSGTKPANKRPMSSPEMKSAPKKSKADGQ. K2005 carries the N6-acetyllysine modification. K2024 is covalently cross-linked (Glycyl lysine isopeptide (Lys-Gly) (interchain with G-Cter in SUMO2)).

In terms of assembly, composed predominantly of six polypeptides ranging from 110 to 150 kDa and a minor 300 kDa polypeptide. The majority of N- and C-terminal cleavage products remain tightly, albeit non-covalently, associated. Interacts with POU2F1, CREB3, ZBTB17, EGR2, E2F4, CREBZF, SP1, GABP2, Sin3 HDAC complex (SIN3A, HDAC1, HDAC2, SUDS3), SAP30, SIN3B and FHL2. Component of a MLL1 complex, composed of at least the core components KMT2A/MLL1, ASH2L, HCFC1, WDR5 and RBBP5, as well as the facultative components BACC1, CHD8, DPY30, E2F6, HCFC2, HSP70, INO80C, KANSL1, LAS1L, MAX, MCRS1, MEN1, MGA, KAT8, PELP1, PHF20, PRP31, RING2, RUVBL1, RUVBL2, SENP3, TAF1, TAF4, TAF6, TAF7, TAF9 and TEX10. Component of a THAP1/THAP3-HCFC1-OGT complex that is required for the regulation of the transcriptional activity of RRM1. Interacts directly with THAP3 (via its HBM). Interacts (via the Kelch-repeat domain) with THAP1 (via the HBM); the interaction recruits HCHC1 to the RRM1. Interacts with THAP7 and THAP11 (via the HMB). Interacts directly with OGT; the interaction, which requires the HCFC1 cleavage site domain, glycosylates and promotes the proteolytic processing of HCFC1, retains OGT in the nucleus and impacts the expression of herpes simplex virus immediate early viral genes. Component of the SET1 complex, at least composed of the catalytic subunit (SETD1A or SETD1B), WDR5, WDR82, RBBP5, ASH2L, CXXC1, HCFC1 and DPY30. Component of the NSL complex at least composed of MOF/KAT8, KANSL1, KANSL2, KANSL3, MCRS1, PHF20, OGT1/OGT, WDR5 and HCFC1. Component of a complex at least composed of ZNF335, HCFC1, CCAR2, EMSY, MKI67, RBBP5, ASH2L and WDR5; the complex is formed as a result of interactions between components of a nuclear receptor-mediated transcription complex and a histone methylation complex. Within the complex interacts with ZNF335. Interacts with TET2 and TET3. Interacts with HCFC1R1. Interacts with THAP11. Interacts (via Kelch domain) with KMT2E/MLL5 isoform 3 (via HBM motif). Interacts with E2F1. Accessory scaffold component of the polycomb repressive deubiquitinase (PR-DUB) complex, at least composed of BAP1, one of ASXL1, ASXL2 or (probably) ASXL3 and one of MBD5 or MBD6; the PR-DUB core associates with a number of accessory proteins, including FOXK1, FOXK2, KDM1B, HCFC1, YY1 and OGT. Interacts with YY1 (via Gly-rich region); the interaction is direct. Interacts with BAP1 (via HBM-like motif). As to quaternary structure, (Microbial infection) Associates with the VP16-induced complex; binding to HCFC1 activates the viral transcriptional activator VP16 for association with POU2F1, to form a multiprotein-DNA complex responsible for activating transcription of the viral immediate early genes. Interacts with the viral transactivator protein VP16. In terms of processing, proteolytically cleaved at one or several PPCE--THET sites within the HCF repeats. Further cleavage of the primary N- and C-terminal chains results in a 'trimming' and accumulation of the smaller chains. Cleavage is promoted by O-glycosylation. O-glycosylated. GlcNAcylation by OGT promotes proteolytic processing. Post-translationally, ubiquitinated. Lys-1807 and Lys-1808 are ubiquitinated both via 'Lys-48'- and 'Lys-63'-linked polyubiquitin chains. BAP1 mediated deubiquitination of 'Lys-48'-linked polyubiquitin chains; deubiquitination by BAP1 does not seem to stabilize the protein. In terms of tissue distribution, highly expressed in fetal tissues and the adult kidney. Present in all tissues tested.

Its subcellular location is the cytoplasm. The protein resides in the nucleus. Its function is as follows. Transcriptional coregulator. Serves as a scaffold protein, bridging interactions between transcription factors, including THAP11 and ZNF143, and transcriptional coregulators. Involved in control of the cell cycle. Also antagonizes transactivation by ZBTB17 and GABP2; represses ZBTB17 activation of the p15(INK4b) promoter and inhibits its ability to recruit p300. Coactivator for EGR2 and GABP2. Tethers the chromatin modifying Set1/Ash2 histone H3 'Lys-4' methyltransferase (H3K4me) and Sin3 histone deacetylase (HDAC) complexes (involved in the activation and repression of transcription, respectively) together. Component of a THAP1/THAP3-HCFC1-OGT complex that is required for the regulation of the transcriptional activity of RRM1. As part of the NSL complex it may be involved in acetylation of nucleosomal histone H4 on several lysine residues. Recruits KMT2E/MLL5 to E2F1 responsive promoters promoting transcriptional activation and thereby facilitates G1 to S phase transition. Modulates expression of homeobox protein PDX1, perhaps acting in concert with transcription factor E2F1, thereby regulating pancreatic beta-cell growth and glucose-stimulated insulin secretion. May negatively modulate transcriptional activity of FOXO3. Functionally, (Microbial infection) In case of human herpes simplex virus (HSV) infection, HCFC1 forms a multiprotein-DNA complex with the viral transactivator protein VP16 and POU2F1 thereby enabling the transcription of the viral immediate early genes. The sequence is that of Host cell factor 1 from Homo sapiens (Human).